Reading from the N-terminus, the 214-residue chain is MNNLKRLTKTIFSCFTLSALLLLAGCETLPPMTDLSPITVTDARQATAWELQGKLAIKTPDDKLSANIYWRHSEDRDELTLTTMLGTTVLTLNSTPNSAHLHIDGKDFRDDNAQRLLERVSGWSIPLADLPLWITGQVGPNDQVIARDSQGKPKQLTNTQTPPPWQVAFLSWQSQSGASVPHQLKLERGDLQLKLQLNQWQALGKPAILVGEQP.

The first 25 residues, 1-25 (MNNLKRLTKTIFSCFTLSALLLLAG), serve as a signal peptide directing secretion. Residue cysteine 26 is the site of N-palmitoyl cysteine attachment. Cysteine 26 carries S-diacylglycerol cysteine lipidation.

This sequence belongs to the LolB family. Monomer.

It is found in the cell outer membrane. In terms of biological role, plays a critical role in the incorporation of lipoproteins in the outer membrane after they are released by the LolA protein. The polypeptide is Outer-membrane lipoprotein LolB (Shewanella baltica (strain OS155 / ATCC BAA-1091)).